A 679-amino-acid chain; its full sequence is Glycine--tRNA ligase beta subunit (679 aa).

Belongs to the class-II aminoacyl-tRNA synthetase family. As to quaternary structure, tetramer of two alpha and two beta subunits.

The protein resides in the cytoplasm. It carries out the reaction tRNA(Gly) + glycine + ATP = glycyl-tRNA(Gly) + AMP + diphosphate. This chain is Glycine--tRNA ligase beta subunit, found in Streptococcus pyogenes serotype M1.